The following is a 252-amino-acid chain: Phosphoribosyl-ATP pyrophosphatase (252 aa).

It belongs to the PRA-PH family.

The protein localises to the cytoplasm. The catalysed reaction is 1-(5-phospho-beta-D-ribosyl)-ATP + H2O = 1-(5-phospho-beta-D-ribosyl)-5'-AMP + diphosphate + H(+). The protein operates within amino-acid biosynthesis; L-histidine biosynthesis; L-histidine from 5-phospho-alpha-D-ribose 1-diphosphate: step 2/9. This is Phosphoribosyl-ATP pyrophosphatase from Magnetococcus marinus (strain ATCC BAA-1437 / JCM 17883 / MC-1).